Reading from the N-terminus, the 668-residue chain is tRNA 5-methylaminomethyl-2-thiouridine biosynthesis bifunctional protein MnmC (668 aa).

Positions 1 to 245 (MKHYSIQPAN…KREMLCGVME (245 aa)) are tRNA (mnm(5)s(2)U34)-methyltransferase. An FAD-dependent cmnm(5)s(2)U34 oxidoreductase region spans residues 270-668 (IGGGIASALL…LLKGKAVKAG (399 aa)).

This sequence in the N-terminal section; belongs to the methyltransferase superfamily. tRNA (mnm(5)s(2)U34)-methyltransferase family. The protein in the C-terminal section; belongs to the DAO family. The cofactor is FAD.

The protein localises to the cytoplasm. The catalysed reaction is 5-aminomethyl-2-thiouridine(34) in tRNA + S-adenosyl-L-methionine = 5-methylaminomethyl-2-thiouridine(34) in tRNA + S-adenosyl-L-homocysteine + H(+). Catalyzes the last two steps in the biosynthesis of 5-methylaminomethyl-2-thiouridine (mnm(5)s(2)U) at the wobble position (U34) in tRNA. Catalyzes the FAD-dependent demodification of cmnm(5)s(2)U34 to nm(5)s(2)U34, followed by the transfer of a methyl group from S-adenosyl-L-methionine to nm(5)s(2)U34, to form mnm(5)s(2)U34. The sequence is that of tRNA 5-methylaminomethyl-2-thiouridine biosynthesis bifunctional protein MnmC from Escherichia coli O9:H4 (strain HS).